A 341-amino-acid polypeptide reads, in one-letter code: Methionine import ATP-binding protein MetN (341 aa).

Residues 9 to 247 (ISVQDVSKKL…SENSITNELF (239 aa)) enclose the ABC transporter domain. 41–48 (GHSGSGKT) provides a ligand contact to ATP.

This sequence belongs to the ABC transporter superfamily. Methionine importer (TC 3.A.1.24) family. As to quaternary structure, the complex is composed of two ATP-binding proteins (MetN), two transmembrane proteins (MetI) and a solute-binding protein (MetQ).

It localises to the cell inner membrane. The enzyme catalyses L-methionine(out) + ATP + H2O = L-methionine(in) + ADP + phosphate + H(+). It carries out the reaction D-methionine(out) + ATP + H2O = D-methionine(in) + ADP + phosphate + H(+). Functionally, part of the ABC transporter complex MetNIQ involved in methionine import. Responsible for energy coupling to the transport system. The polypeptide is Methionine import ATP-binding protein MetN (Chlamydia pneumoniae (Chlamydophila pneumoniae)).